Consider the following 124-residue polypeptide: Mitochondrial import inner membrane translocase subunit TIM16 (124 aa).

The segment at 58–109 is J-like; sequence EAQQILNISKLSPEEVQNYEHLFKVNDKSVGDSFYLQSKVVRAKERLDEELQ. At Ser-69 the chain carries Phosphoserine.

The protein belongs to the TIM16/PAM16 family. As to quaternary structure, probable component of the PAM complex at least composed of a mitochondrial HSP70 protein, GRPEL1 or GRPEL2, TIMM44, TIMM16/PAM16 and TIMM14/DNAJC19. Interacts with DNAJC19. Directly interacts with DNAJC15; this interaction counteracts DNAJC15-dependent stimulation of HSPA9 ATPase activity. Associates with the TIM23 complex.

It localises to the mitochondrion inner membrane. Its function is as follows. Regulates ATP-dependent protein translocation into the mitochondrial matrix. Inhibits DNAJC19 stimulation of HSPA9/Mortalin ATPase activity. This Rattus norvegicus (Rat) protein is Mitochondrial import inner membrane translocase subunit TIM16 (Magmas-ps1).